Consider the following 378-residue polypeptide: MLKQLKNYRRIVVKIGSALLVDRAAGLKRDWLESLGQDIAALHHAGVEVLVVSSGAIALGRTVLGLPKKALKLEESQAAAAAGQIALAKAYADVLGGHSIRSGQILVTLSDTEERRRYLNARATIETLLKLKAVPVINENDTVATTEIRYGDNDRLAARVATMMGADLLVLLSDIDGLYTAPPHKNPDAEFLPLVETITPQIEAMAGAAASELSRGGMKTKLDAGKIANAAGTAMIITSGTRFGPLSAIDRGERATLFEPARAPVNAWKTWISGNLEPAGRLTVDAGAAKALKSGKSLLPAGVKEIDGQFERGDTVAVLNEDGREIARGLIAYDAEDARKIAGHKSDEISEILGYDARAAMIHRNDLVVRAASNAEVA.

Position 14 (Lys14) interacts with ATP. Residues Ser54, Asp141, and Asn153 each coordinate substrate. 173-174 (SD) is a binding site for ATP. In terms of domain architecture, PUA spans 279–356 (AGRLTVDAGA…DEISEILGYD (78 aa)).

The protein belongs to the glutamate 5-kinase family.

The protein localises to the cytoplasm. It carries out the reaction L-glutamate + ATP = L-glutamyl 5-phosphate + ADP. It functions in the pathway amino-acid biosynthesis; L-proline biosynthesis; L-glutamate 5-semialdehyde from L-glutamate: step 1/2. Its function is as follows. Catalyzes the transfer of a phosphate group to glutamate to form L-glutamate 5-phosphate. The protein is Glutamate 5-kinase of Brucella anthropi (strain ATCC 49188 / DSM 6882 / CCUG 24695 / JCM 21032 / LMG 3331 / NBRC 15819 / NCTC 12168 / Alc 37) (Ochrobactrum anthropi).